The primary structure comprises 201 residues: Translation initiation factor IF-3 (201 aa).

The interval 167–201 (PHRGAKTRARARHPGEPAGGPPPKPTAGDSKAAPN) is disordered. Positions 169 to 178 (RGAKTRARAR) are enriched in basic residues.

This sequence belongs to the IF-3 family. Monomer.

The protein localises to the cytoplasm. Its function is as follows. IF-3 binds to the 30S ribosomal subunit and shifts the equilibrium between 70S ribosomes and their 50S and 30S subunits in favor of the free subunits, thus enhancing the availability of 30S subunits on which protein synthesis initiation begins. In Mycobacterium bovis (strain ATCC BAA-935 / AF2122/97), this protein is Translation initiation factor IF-3.